The primary structure comprises 514 residues: Histidine ammonia-lyase (514 aa).

Positions 142-144 (ASG) form a cross-link, 5-imidazolinone (Ala-Gly). 2,3-didehydroalanine (Ser) is present on S143.

It belongs to the PAL/histidase family. Post-translationally, contains an active site 4-methylidene-imidazol-5-one (MIO), which is formed autocatalytically by cyclization and dehydration of residues Ala-Ser-Gly.

The protein localises to the cytoplasm. The enzyme catalyses L-histidine = trans-urocanate + NH4(+). Its pathway is amino-acid degradation; L-histidine degradation into L-glutamate; N-formimidoyl-L-glutamate from L-histidine: step 1/3. The sequence is that of Histidine ammonia-lyase from Sorangium cellulosum (strain So ce56) (Polyangium cellulosum (strain So ce56)).